A 612-amino-acid chain; its full sequence is Dihydroxy-acid dehydratase (612 aa).

A Mg(2+)-binding site is contributed by Asp81. A [2Fe-2S] cluster-binding site is contributed by Cys122. The Mg(2+) site is built by Asp123 and Lys124. The residue at position 124 (Lys124) is an N6-carboxylysine. A [2Fe-2S] cluster-binding site is contributed by Cys195. Position 491 (Glu491) interacts with Mg(2+). Residue Ser517 is the Proton acceptor of the active site.

This sequence belongs to the IlvD/Edd family. In terms of assembly, homodimer. [2Fe-2S] cluster serves as cofactor. Mg(2+) is required as a cofactor.

The catalysed reaction is (2R)-2,3-dihydroxy-3-methylbutanoate = 3-methyl-2-oxobutanoate + H2O. It catalyses the reaction (2R,3R)-2,3-dihydroxy-3-methylpentanoate = (S)-3-methyl-2-oxopentanoate + H2O. Its pathway is amino-acid biosynthesis; L-isoleucine biosynthesis; L-isoleucine from 2-oxobutanoate: step 3/4. It participates in amino-acid biosynthesis; L-valine biosynthesis; L-valine from pyruvate: step 3/4. In terms of biological role, functions in the biosynthesis of branched-chain amino acids. Catalyzes the dehydration of (2R,3R)-2,3-dihydroxy-3-methylpentanoate (2,3-dihydroxy-3-methylvalerate) into 2-oxo-3-methylpentanoate (2-oxo-3-methylvalerate) and of (2R)-2,3-dihydroxy-3-methylbutanoate (2,3-dihydroxyisovalerate) into 2-oxo-3-methylbutanoate (2-oxoisovalerate), the penultimate precursor to L-isoleucine and L-valine, respectively. The protein is Dihydroxy-acid dehydratase of Buchnera aphidicola subsp. Baizongia pistaciae (strain Bp).